A 1640-amino-acid polypeptide reads, in one-letter code: Phospholipase D C (1640 aa).

The segment covering 122-132 (SHRSNQSFNHS) has biased composition (polar residues). Disordered stretches follow at residues 122–247 (SHRS…KRLS), 264–283 (HNQN…HTTT), 439–499 (EKQQ…YKYN), and 521–541 (DDEY…PSQE). Positions 133-193 (NSTTPLNTTN…YSSDNSYLHN (61 aa)) are enriched in low complexity. Over residues 197-231 (DIYEDEDDEDDEDDDDDEDEDDEGKEFEQDDEDES) the composition is skewed to acidic residues. A compositionally biased stretch (polar residues) spans 232-247 (TISSMSLKNSQAKRLS). Low complexity-rich tracts occupy residues 264-273 (HNQNHQNHQN) and 467-499 (TTTT…YKYN). Positions 521-534 (DDEYYYGEYDDEDD) are enriched in acidic residues. A PLD phosphodiesterase 1 domain is found at 1009-1036 (LYWSHHQKVVVVDQRIAFIGGLDLCFGR). Residues H1014, K1016, and D1021 contribute to the active site. 2 stretches are compositionally biased toward low complexity: residues 1149–1274 (INNN…NNLN) and 1282–1296 (HNNS…QQQQ). Positions 1149–1315 (INNNNNNANN…YQPPLPPQQR (167 aa)) are disordered. A compositionally biased stretch (basic residues) spans 1297–1306 (QHHHHHHHHY). Positions 1460-1487 (EQIYVHSKVLIVDDKIAIIGSANINDRS) constitute a PLD phosphodiesterase 2 domain. Residues H1465, K1467, and D1472 contribute to the active site.

It belongs to the phospholipase D family.

The catalysed reaction is a 1,2-diacyl-sn-glycero-3-phosphocholine + H2O = a 1,2-diacyl-sn-glycero-3-phosphate + choline + H(+). With respect to regulation, inhibited by butan-1-ol. Its function is as follows. Plays a role in cell growth. Hydrolyzes membrane phospholipids, such as PtdCho (phosphatidylcholine), producing the free headgroup and PtdOH (phosphatidic acid; signaling molecule on its own). Involved in the inhibition of actin-based motility and endocytosis. Its inhibition causes complete collapse of F-actin organization. In Dictyostelium discoideum (Social amoeba), this protein is Phospholipase D C (pldC).